The sequence spans 404 residues: S-adenosylmethionine synthase (404 aa).

139-144 lines the ATP pocket; sequence GKGSTD.

Belongs to the AdoMet synthase 2 family. The cofactor is Mg(2+).

The catalysed reaction is L-methionine + ATP + H2O = S-adenosyl-L-methionine + phosphate + diphosphate. It participates in amino-acid biosynthesis; S-adenosyl-L-methionine biosynthesis; S-adenosyl-L-methionine from L-methionine: step 1/1. Its function is as follows. Catalyzes the formation of S-adenosylmethionine from methionine and ATP. The sequence is that of S-adenosylmethionine synthase from Saccharolobus islandicus (strain L.S.2.15 / Lassen #1) (Sulfolobus islandicus).